Here is a 420-residue protein sequence, read N- to C-terminus: UDP-N-acetyl-D-mannosamine dehydrogenase (420 aa).

Tyr-13, Ile-14, Asp-33, Thr-85, and Thr-126 together coordinate NAD(+). Residues Arg-160, Val-161, Lys-212, Asn-216, Arg-219, His-250, Arg-252, and Gly-263 each coordinate UDP-N-acetyl-alpha-D-mannosaminouronate. The active-site Proton donor/acceptor is Lys-212. The Nucleophile role is filled by Cys-266. Residues Phe-330 and Lys-331 each coordinate UDP-N-acetyl-alpha-D-mannosaminouronate. Arg-338 serves as a coordination point for NAD(+). Lys-416 provides a ligand contact to UDP-N-acetyl-alpha-D-mannosaminouronate.

It belongs to the UDP-glucose/GDP-mannose dehydrogenase family. WecC subfamily. As to quaternary structure, homodimer.

The catalysed reaction is UDP-N-acetyl-alpha-D-mannosamine + 2 NAD(+) + H2O = UDP-N-acetyl-alpha-D-mannosaminouronate + 2 NADH + 3 H(+). It functions in the pathway bacterial outer membrane biogenesis; enterobacterial common antigen biosynthesis. In terms of biological role, catalyzes the four-electron oxidation of UDP-N-acetyl-D-mannosamine (UDP-ManNAc), reducing NAD(+) and releasing UDP-N-acetylmannosaminuronic acid (UDP-ManNAcA). The sequence is that of UDP-N-acetyl-D-mannosamine dehydrogenase from Salmonella typhi.